Here is a 327-residue protein sequence, read N- to C-terminus: dTDP-4-dehydrorhamnose reductase (327 aa).

The segment at 1–22 is disordered; sequence MDLINGMGTSPGYWRTPREPGN. NADH is bound by residues 43-45, 69-70, and 91-93; these read GMV, DI, and AYT. NADPH contacts are provided by residues 44-45, 69-70, and 91-93; these read MV, DI, and AYT. Residue 132-133 coordinates dTDP-beta-L-rhamnose; the sequence is TD. NADH is bound by residues Tyr-157 and Lys-161. 2 residues coordinate NADPH: Tyr-157 and Lys-161. Residue Tyr-157 is the Proton donor/acceptor of the active site. Residue Trp-182 coordinates dTDP-beta-L-rhamnose. A compositionally biased stretch (basic and acidic residues) spans 264–276; that stretch reads PERVRPCGSDRHP. The interval 264–292 is disordered; it reads PERVRPCGSDRHPRPAPRPSYTVLSSQRS.

The protein belongs to the dTDP-4-dehydrorhamnose reductase family. Mg(2+) is required as a cofactor.

The catalysed reaction is dTDP-beta-L-rhamnose + NADP(+) = dTDP-4-dehydro-beta-L-rhamnose + NADPH + H(+). It functions in the pathway carbohydrate biosynthesis; dTDP-L-rhamnose biosynthesis. Involved in the biosynthesis of the dTDP-L-rhamnose which is a component of the critical linker, D-N-acetylglucosamine-L-rhamnose disaccharide, which connects the galactan region of arabinogalactan to peptidoglycan via a phosphodiester linkage. Catalyzes the reduction of dTDP-6-deoxy-L-lyxo-4-hexulose to yield dTDP-L-rhamnose. In Mycolicibacterium smegmatis (strain ATCC 700084 / mc(2)155) (Mycobacterium smegmatis), this protein is dTDP-4-dehydrorhamnose reductase.